We begin with the raw amino-acid sequence, 93 residues long: Small integral membrane protein 36 (93 aa).

The helical transmembrane segment at 14 to 34 (LIILVASYVILLLVFLVSCVL) threads the bilayer. The tract at residues 70–93 (SHWARGPSLHLKDPAPLGKKSTVV) is disordered.

It localises to the membrane. In Mus musculus (Mouse), this protein is Small integral membrane protein 36.